Consider the following 73-residue polypeptide: Pelophylaxin-1 (73 aa).

The first 22 residues, 1 to 22 (MFTMKKSLLLVFFLGTIALSLC), serve as a signal peptide directing secretion. Residues 23-41 (EEERGADDDNGGEITDEEI) constitute a propeptide that is removed on maturation. Residues C67 and C73 are joined by a disulfide bond.

Expressed by the skin glands.

The protein resides in the secreted. Its function is as follows. Antimicrobial peptide. The polypeptide is Pelophylaxin-1 (Pelophylax fukienensis (Fukien gold-striped pond frog)).